The primary structure comprises 50 residues: Protein HokA (50 aa).

Residues 7-24 (LLSLIVICFTLLFFTWMI) traverse the membrane as a helical segment.

This sequence belongs to the Hok/Gef family.

It localises to the cell inner membrane. Its function is as follows. Toxic component of a type I toxin-antitoxin (TA) system. When overexpressed kills cells within minutes; causes collapse of the transmembrane potential and arrest of respiration. Its toxic effect is probably neutralized by antisense antitoxin RNA SokA. The protein is Protein HokA of Escherichia coli (strain K12).